A 314-amino-acid chain; its full sequence is Acetaldehyde dehydrogenase 1 (314 aa).

Residue 11–14 (SGNI) participates in NAD(+) binding. The active-site Acyl-thioester intermediate is Cys-129. Residues 160-168 (SAGPGTRAN) and Asn-292 contribute to the NAD(+) site.

The protein belongs to the acetaldehyde dehydrogenase family.

It carries out the reaction acetaldehyde + NAD(+) + CoA = acetyl-CoA + NADH + H(+). This Nocardioides sp. (strain ATCC BAA-499 / JS614) protein is Acetaldehyde dehydrogenase 1.